Reading from the N-terminus, the 279-residue chain is Shikimate dehydrogenase (NADP(+)) (279 aa).

Shikimate contacts are provided by residues Ser20–Ser22 and Thr67. The Proton acceptor role is filled by Lys71. Position 83 (Asp83) interacts with NADP(+). 2 residues coordinate shikimate: Asn92 and Asp108. NADP(+) is bound by residues Gly134–Ala138 and Leu223. A shikimate-binding site is contributed by Tyr225. NADP(+) is bound at residue Gly246.

The protein belongs to the shikimate dehydrogenase family. As to quaternary structure, homodimer.

It carries out the reaction shikimate + NADP(+) = 3-dehydroshikimate + NADPH + H(+). It functions in the pathway metabolic intermediate biosynthesis; chorismate biosynthesis; chorismate from D-erythrose 4-phosphate and phosphoenolpyruvate: step 4/7. Involved in the biosynthesis of the chorismate, which leads to the biosynthesis of aromatic amino acids. Catalyzes the reversible NADPH linked reduction of 3-dehydroshikimate (DHSA) to yield shikimate (SA). The chain is Shikimate dehydrogenase (NADP(+)) from Cereibacter sphaeroides (strain ATCC 17025 / ATH 2.4.3) (Rhodobacter sphaeroides).